Reading from the N-terminus, the 311-residue chain is tRNA dimethylallyltransferase (311 aa).

Residue 9–16 (GPTAVGKT) participates in ATP binding. 11-16 (TAVGKT) is a substrate binding site. Positions 34–37 (DSMQ) are interaction with substrate tRNA.

The protein belongs to the IPP transferase family. Monomer. Requires Mg(2+) as cofactor.

It catalyses the reaction adenosine(37) in tRNA + dimethylallyl diphosphate = N(6)-dimethylallyladenosine(37) in tRNA + diphosphate. Catalyzes the transfer of a dimethylallyl group onto the adenine at position 37 in tRNAs that read codons beginning with uridine, leading to the formation of N6-(dimethylallyl)adenosine (i(6)A). In Clostridium botulinum (strain Loch Maree / Type A3), this protein is tRNA dimethylallyltransferase.